The following is a 904-amino-acid chain: Pyrimidine pathway regulatory protein 1 (904 aa).

Residues 1–11 show a composition bias toward basic residues; that stretch reads MKQKKFNSKKS. A disordered region spans residues 1–27; sequence MKQKKFNSKKSNRTDLSKRGDSPNIGI. Residues 12–21 show a composition bias toward basic and acidic residues; it reads NRTDLSKRGD. The Zn(2+) site is built by cysteine 34, cysteine 37, cysteine 44, cysteine 51, cysteine 54, and cysteine 61. The zn(2)-C6 fungal-type DNA-binding region spans 34–61; it reads CKRCRLKKIKCDQEFPSCKRCAKLEVPC. The segment at 883 to 904 is disordered; that stretch reads GNEGESSYDISKGKNSESGGIF.

Binds DNA as a homodimer.

Its subcellular location is the nucleus. In terms of biological role, positive regulator of URA1 and URA3 expression. This Saccharomyces cerevisiae (strain ATCC 204508 / S288c) (Baker's yeast) protein is Pyrimidine pathway regulatory protein 1 (PPR1).